The primary structure comprises 220 residues: Regulatory protein VanRB (220 aa).

The 114-residue stretch at 4 to 117 (RILLVEDDDH…ILLKRVEALL (114 aa)) folds into the Response regulatory domain. Position 53 is a 4-aspartylphosphate (Asp-53). The segment at residues 124-218 (AKEFRVGRLT…IRGVGYRLEE (95 aa)) is a DNA-binding region (ompR/PhoB-type).

May be phosphorylated by VanSB. May also be dephosphorylated by VanSB.

Its subcellular location is the cytoplasm. Member of the two-component regulatory system VanSB/VanRB. Activates the transcription of vanSB, vanYB and vanW in response to vancomycin which results in vancomycin resistance. The sequence is that of Regulatory protein VanRB (vanRB) from Enterococcus faecalis (strain ATCC 700802 / V583).